Reading from the N-terminus, the 309-residue chain is MILLPFHTRRLVSHVYCGLKPASQNKGIALEMTRPSSNLANFREAFAKAKHIAVITGAGVSAESGVPTIIGAGGYWRKWQAQHLATPEAFSRNPSRVWEFYHYRREVMLTKNPNPAHLAIAECETRLRKQGRKVVVITQNIDELHHKAGSRNLFEIHGSLFKTRCTSCGSVKENYKSPICSALAGKGAPESDVQDAKIPVEKLPRCEENGCNGLLRPNVVWFGETLDSNLLGEVEKELEMCDLCVVVGTSSVVYPAAMFAPQVAARGVPVAEFNMENTSATTTFKFHFQGPCGTTLPPALARHETELIS.

The transit peptide at 1 to 35 (MILLPFHTRRLVSHVYCGLKPASQNKGIALEMTRP) directs the protein to the mitochondrion. Residues 36 to 306 (SSNLANFREA…PPALARHETE (271 aa)) enclose the Deacetylase sirtuin-type domain. 57-76 (GAGVSAESGVPTIIGAGGYW) lines the NAD(+) pocket. Y101 and R104 together coordinate substrate. NAD(+) is bound at residue 139 to 142 (QNID). Residue H157 is the Proton acceptor of the active site. C165, C168, C206, and C211 together coordinate Zn(2+). NAD(+) is bound by residues 248–250 (GTS), 274–276 (NME), and C292.

Belongs to the sirtuin family. Class III subfamily. It depends on Zn(2+) as a cofactor.

Its subcellular location is the mitochondrion. The protein resides in the cytoplasm. It is found in the cytosol. The protein localises to the nucleus. The enzyme catalyses N(6)-malonyl-L-lysyl-[protein] + NAD(+) + H2O = 2''-O-malonyl-ADP-D-ribose + nicotinamide + L-lysyl-[protein]. The catalysed reaction is N(6)-succinyl-L-lysyl-[protein] + NAD(+) + H2O = 2''-O-succinyl-ADP-D-ribose + nicotinamide + L-lysyl-[protein]. It catalyses the reaction N(6)-glutaryl-L-lysyl-[protein] + NAD(+) + H2O = 2''-O-glutaryl-ADP-D-ribose + nicotinamide + L-lysyl-[protein]. Its function is as follows. NAD-dependent lysine demalonylase, desuccinylase and deglutarylase that specifically removes malonyl, succinyl and glutaryl groups on target proteins. Has weak NAD-dependent protein deacetylase activity; however this activity may not be physiologically relevant in vivo. The protein is NAD-dependent protein deacylase sirtuin-5B, mitochondrial (sirt5-b) of Xenopus laevis (African clawed frog).